Reading from the N-terminus, the 385-residue chain is HAT1-interacting factor 1 (385 aa).

An important for interaction with heterotetrameric histone H3 and H4 and for interaction with dimeric histone H2A and H2B region spans residues 80–199; sequence GNLFGDALLA…RKSGFHIYFE (120 aa). 2 stretches are compositionally biased toward low complexity: residues 85–97 and 105–116; these read DALL…SGSE and DVSNGEEGNENG. The segment at 85–163 is disordered; it reads DALLAGDDGS…EEENVEKEEE (79 aa). The span at 129-160 shows a compositional bias: acidic residues; that stretch reads DQEEEDLTGDVDSGDSEDSGEGSEEEEENVEK. Phosphoserine is present on Ser-174. 3 TPR repeats span residues 186 to 220, 229 to 262, and 289 to 322; these read VSQL…LGRP, ENSR…YLKA, and ALRW…RPKD. Positions 248–332 are interaction with dimeric histone H2A and H2B; it reads EAEMFSRAIH…SELQQARLAQ (85 aa). The disordered stretch occupies residues 340–385; the sequence is VQENQQHGSKRPLSQPTTSIGFPALEKPLGDFNDLSQLVKKKPRRH. Positions 342-359 are enriched in polar residues; sequence ENQQHGSKRPLSQPTTSI.

This sequence belongs to the NASP family. Homodimer. The homodimer interacts with a histone tetramer containing H3 and H4; the interaction is direct. The homodimer interacts with heterodimeric histone H2A and H2B; the interaction is direct. Component of the nuclear histone acetyltransferase B (HAT-B) complex composed of at least HAT1, HAT2 and HIF1. Does not interact with HAT1 in the absence of HAT2. Interacts with histones H3 and H4 in a HAT1/HAT2 dependent manner. Interaction with heterotetrameric histone H3 and H4 precludes interaction with dimeric histone H2A and H2B, irrespective of the fact that their binding involves non-identical regions of the protein.

It is found in the nucleus. Its function is as follows. Histone H3 and H4 specific chaperone component of the nuclear histone acetyltransferase B (HAT-B) complex. Involved in chromatin assembly and telomere silencing. The protein is HAT1-interacting factor 1 (HIF1) of Saccharomyces cerevisiae (strain ATCC 204508 / S288c) (Baker's yeast).